A 721-amino-acid chain; its full sequence is Exo beta-1,2-glucooligosaccharide sophorohydrolase (non-reducing end) (721 aa).

The signal sequence occupies residues 1–18; the sequence is MKHIALLTTLLLSASLQA. Residues 474 to 708 enclose the Glycoamylase-like domain; sequence NHKLIGWNET…LLWNLFMSHP (235 aa).

Monomer.

It is found in the periplasm. The catalysed reaction is [(1-&gt;2)-beta-D-glucosyl](n) + H2O = [(1-&gt;2)-beta-D-glucosyl](n-2) + sophorose. Its function is as follows. Catalyzes the hydrolysis of linear beta-1,2-glucan and beta-1,2-glucooligosaccharides with degrees of polymerization (DPs) greater than or equal to 4, to produce sophorose. The best substrates are tetra- and pentasaccharides. Acts as an exo-type enzyme that releases sophorose from the non-reducing end of the substrate. It cannot hydrolyze cyclic beta-1,2-glucans. In Parabacteroides distasonis (strain ATCC 8503 / DSM 20701 / CIP 104284 / JCM 5825 / NCTC 11152), this protein is Exo beta-1,2-glucooligosaccharide sophorohydrolase (non-reducing end).